The sequence spans 251 residues: Ubiquinone/menaquinone biosynthesis C-methyltransferase UbiE (251 aa).

S-adenosyl-L-methionine-binding positions include threonine 74, aspartate 95, 123 to 124, and serine 140; that span reads NA.

The protein belongs to the class I-like SAM-binding methyltransferase superfamily. MenG/UbiE family.

The enzyme catalyses a 2-demethylmenaquinol + S-adenosyl-L-methionine = a menaquinol + S-adenosyl-L-homocysteine + H(+). It carries out the reaction a 2-methoxy-6-(all-trans-polyprenyl)benzene-1,4-diol + S-adenosyl-L-methionine = a 5-methoxy-2-methyl-3-(all-trans-polyprenyl)benzene-1,4-diol + S-adenosyl-L-homocysteine + H(+). It functions in the pathway quinol/quinone metabolism; menaquinone biosynthesis; menaquinol from 1,4-dihydroxy-2-naphthoate: step 2/2. Its pathway is cofactor biosynthesis; ubiquinone biosynthesis. Functionally, methyltransferase required for the conversion of demethylmenaquinol (DMKH2) to menaquinol (MKH2) and the conversion of 2-polyprenyl-6-methoxy-1,4-benzoquinol (DDMQH2) to 2-polyprenyl-3-methyl-6-methoxy-1,4-benzoquinol (DMQH2). The chain is Ubiquinone/menaquinone biosynthesis C-methyltransferase UbiE from Escherichia fergusonii (strain ATCC 35469 / DSM 13698 / CCUG 18766 / IAM 14443 / JCM 21226 / LMG 7866 / NBRC 102419 / NCTC 12128 / CDC 0568-73).